Here is a 201-residue protein sequence, read N- to C-terminus: Cell division protein SepF (201 aa).

A compositionally biased stretch (basic and acidic residues) spans 27 to 38; the sequence is VQERTSVQRDSR. The interval 27–99 is disordered; that stretch reads VQERTSVQRD…PRIQNKDSVR (73 aa). 2 stretches are compositionally biased toward polar residues: residues 43-54 and 82-92; these read QEASQRSHMTNS and DNSYQQATPRI.

It belongs to the SepF family. In terms of assembly, homodimer. Interacts with FtsZ.

It is found in the cytoplasm. Its function is as follows. Cell division protein that is part of the divisome complex and is recruited early to the Z-ring. Probably stimulates Z-ring formation, perhaps through the cross-linking of FtsZ protofilaments. Its function overlaps with FtsA. This Streptococcus agalactiae serotype III (strain NEM316) protein is Cell division protein SepF.